The chain runs to 1021 residues: Putative 115 kDa protein in type-1 retrotransposable element R1DM (1021 aa).

The Reverse transcriptase domain maps to 479 to 741 (RCIRLGYFPA…RSCRYLGITV (263 aa)). Residues 955–971 (CACGDPYEDWMHILCAC) are gag-like cysteine motif.

This is Putative 115 kDa protein in type-1 retrotransposable element R1DM (R1A1-element\ORF2) from Drosophila melanogaster (Fruit fly).